Here is a 1016-residue protein sequence, read N- to C-terminus: MPFSLRSTSFCFLACLCSYSYGFASSPQVLTPNVTTPFKGDDVYLNGDCAFVNVYAGAENGSIISANGDNLTITGQNHTLSFTDSQGPVLQNYAFISAGETLTLKDFSSLMFSKNVSCGEKGMISGKTVSISGAGEVIFWDNSVGYSPLSIVPASTPTPPAPAPAPAASSSLSPTVSDARKGSIFSVETSLEISGVKKGVMFDNNAGNFGTVFRGNSNNNAGSGGSGSATTPSFTVKNCKGKVSFTDNVASCGGGVVYKGTVLFKDNEGGIFFRGNTAYDDLGILAATSRDQNTETGGGGGVICSPDDSVKFEGNKGSIVFDYNFAKGRGGSILTKEFSLVADDSVVFSNNTAEKGGGAIYAPTIDISTNGGSILFERNRAAEGGAICVSEASSGSTGNLTLSASDGDIVFSGNMTSDRPGERSAARILSDGTTVSLNASGLSKLIFYDPVVQNNSAAGASTPSPSSSSMPGAVTINQSGNGSVIFTAESLTPSEKLQVLNSTSNFPGALTVSGGELVVTEGATLTTGTITATSGRVTLGSGASLSAVAGAANNNYTCTVSKLGIDLESFLTPNYKTAILGADGTVTVNSGSTLDLVMESEAEVYDNPLFVGSLTIPFVTLSSSSASNGVTKNSVTINDADAAHYGYQGSWSADWTKPPLAPDAKGMVPPNTNNTLYLTWRPASNYGEYRLDPQRKGELVPNSLWVAGSALRTFTNGLKEHYVSRDVGFVASLHALGDYILNYTQDDRDGFLARYGGFQATAASHYENGSIFGVAFGQLYGQTKSRMYYSKDAGNMTMLSCFGRSYVDIKGTETVMYWETAYGYSVHRMHTQYFNDKTQKFDHSKCHWHNNNYYAFVGAEHNFLEYCIPTRQFARDYELTGFMRFEMAGGWSSSTRETGSLTRYFARGSGHNMSLPIGIVAHAVSHVRRSPPSKLTLNMGYRPDIWRVTPHCNMEIIANGVKTPIQGSPLARHAFFLEVHDTLYIHHFGRAYMNYSLDARRRQTAHFVSMGLNRIF.

A signal peptide spans 1 to 24 (MPFSLRSTSFCFLACLCSYSYGFA). An Autotransporter domain is found at 697 to 1016 (GELVPNSLWV…FVSMGLNRIF (320 aa)).

This sequence belongs to the PMP outer membrane protein family.

Its subcellular location is the secreted. It localises to the cell wall. The protein resides in the cell outer membrane. In Chlamydia trachomatis serovar D (strain ATCC VR-885 / DSM 19411 / UW-3/Cx), this protein is Probable outer membrane protein PmpH (pmpH).